Consider the following 860-residue polypeptide: DNA mismatch repair protein MutS (860 aa).

608–615 contributes to the ATP binding site; that stretch reads GPNMAGKS.

The protein belongs to the DNA mismatch repair MutS family.

Functionally, this protein is involved in the repair of mismatches in DNA. It is possible that it carries out the mismatch recognition step. This protein has a weak ATPase activity. The polypeptide is DNA mismatch repair protein MutS (Borrelia turicatae (strain 91E135)).